Here is a 226-residue protein sequence, read N- to C-terminus: Probable transcriptional regulator RABBIT EARS (226 aa).

The C2H2-type zinc-finger motif lies at 55–77; the sequence is YSCSFCGREFKSAQALGGHMNVH. Residues 80 to 102 are disordered; the sequence is DRARLKQQSLSPSSTDQATPPEC. Over residues 85–97 the composition is skewed to polar residues; sequence KQQSLSPSSTDQA. The EAR-like (transcriptional repression) signature appears at 212 to 216; it reads LDLEL.

In terms of tissue distribution, strongly expressed in inflorescences and flowers, and weakly in siliques, seedlings and roots. In flowers, it is expressed in petal primordia and their precursor cells. Also expressed in the lateral root caps and the basal cells of lateral roots.

It is found in the nucleus. Functionally, probable transcriptional regulator essential for petal development. Required for the early development of the organ primordia of the second whorl. Acts downstream of AP1 and PTL. The protein is Probable transcriptional regulator RABBIT EARS (RBE) of Arabidopsis thaliana (Mouse-ear cress).